A 413-amino-acid polypeptide reads, in one-letter code: Paxillin homolog 1 (413 aa).

Positions 33-45 (HISDRRSQSRDDF) are enriched in basic and acidic residues. The tract at residues 33 to 157 (HISDRRSQSR…PLHSDSMIGT (125 aa)) is disordered. Polar residues predominate over residues 49-69 (YDLQGNLNTQSVSNGNITTSP). Residues 73-92 (RSSEGKDYSKSQERIYENES) are compositionally biased toward basic and acidic residues. A compositionally biased stretch (polar residues) spans 118–143 (ASSSRKSLGPPSQAQSYSDVRSNGRS). 4 LIM zinc-binding domains span residues 174 to 232 (GDCA…NQFS), 233 to 292 (PKCQ…LFAP), 293 to 350 (KCNG…ESRG), and 351 to 410 (SICS…TYAL).

This sequence belongs to the paxillin family. Isoform a: Expressed in all 95 body wall muscle cells as well as in the pharyngeal muscle cells (at protein level). Isoform c: Expressed in the body wall muscle cells and in the pharyngeal muscle cells.

The protein resides in the cell junction. Its subcellular location is the adherens junction. The protein localises to the cell membrane. It localises to the cytoplasm. It is found in the myofibril. The protein resides in the sarcomere. Its subcellular location is the m line. The protein localises to the cell projection. It localises to the podosome. Required for myofilament organization of the pharyngeal sarcomeres and for pharyngeal muscle contractions and hence for pharyngeal pumping. Together with lin-8, might be required for myofilament organization in the body wall muscles. The polypeptide is Paxillin homolog 1 (pxl-1) (Caenorhabditis elegans).